We begin with the raw amino-acid sequence, 687 residues long: Glycine--tRNA ligase beta subunit (687 aa).

It belongs to the class-II aminoacyl-tRNA synthetase family. As to quaternary structure, tetramer of two alpha and two beta subunits.

The protein resides in the cytoplasm. The enzyme catalyses tRNA(Gly) + glycine + ATP = glycyl-tRNA(Gly) + AMP + diphosphate. This is Glycine--tRNA ligase beta subunit from Geobacter sulfurreducens (strain ATCC 51573 / DSM 12127 / PCA).